We begin with the raw amino-acid sequence, 218 residues long: Ribose-5-phosphate isomerase A (218 aa).

Substrate-binding positions include 28–31 (TGST), 81–84 (DGAD), and 94–97 (KGGG). E103 serves as the catalytic Proton acceptor. A substrate-binding site is contributed by K121.

Belongs to the ribose 5-phosphate isomerase family. As to quaternary structure, homodimer.

The catalysed reaction is aldehydo-D-ribose 5-phosphate = D-ribulose 5-phosphate. It functions in the pathway carbohydrate degradation; pentose phosphate pathway; D-ribose 5-phosphate from D-ribulose 5-phosphate (non-oxidative stage): step 1/1. Catalyzes the reversible conversion of ribose-5-phosphate to ribulose 5-phosphate. The polypeptide is Ribose-5-phosphate isomerase A (Pseudoalteromonas atlantica (strain T6c / ATCC BAA-1087)).